The chain runs to 351 residues: Histidinol-phosphate aminotransferase (351 aa).

Lys221 is subject to N6-(pyridoxal phosphate)lysine.

The protein belongs to the class-II pyridoxal-phosphate-dependent aminotransferase family. Histidinol-phosphate aminotransferase subfamily. As to quaternary structure, homodimer. Pyridoxal 5'-phosphate serves as cofactor.

It catalyses the reaction L-histidinol phosphate + 2-oxoglutarate = 3-(imidazol-4-yl)-2-oxopropyl phosphate + L-glutamate. It participates in amino-acid biosynthesis; L-histidine biosynthesis; L-histidine from 5-phospho-alpha-D-ribose 1-diphosphate: step 7/9. The chain is Histidinol-phosphate aminotransferase from Staphylococcus saprophyticus subsp. saprophyticus (strain ATCC 15305 / DSM 20229 / NCIMB 8711 / NCTC 7292 / S-41).